We begin with the raw amino-acid sequence, 485 residues long: Adenosylhomocysteinase 1 (485 aa).

3 residues coordinate substrate: Thr-64, Asp-139, and Glu-205. 206 to 208 serves as a coordination point for NAD(+); it reads TTT. Substrate contacts are provided by Lys-235 and Asp-239. Residues 271 to 276, Glu-292, 348 to 350, Asn-397, His-404, Lys-479, 479 to 483, and Tyr-483 each bind NAD(+); these read GDVGKG, IGH, and KPPHY.

It belongs to the adenosylhomocysteinase family. In terms of assembly, homotetramer. NAD(+) is required as a cofactor.

The enzyme catalyses S-adenosyl-L-homocysteine + H2O = L-homocysteine + adenosine. It functions in the pathway amino-acid biosynthesis; L-homocysteine biosynthesis; L-homocysteine from S-adenosyl-L-homocysteine: step 1/1. Functionally, essential protein during embryogenesis. Adenosylhomocysteine is a competitive inhibitor of S-adenosyl-L-methionine-dependent methyl transferase reactions; therefore adenosylhomocysteinase may play a key role in the control of methylations via regulation of the intracellular concentration of adenosylhomocysteine. Required for DNA methylation-dependent gene silencing. This chain is Adenosylhomocysteinase 1, found in Arabidopsis thaliana (Mouse-ear cress).